Consider the following 336-residue polypeptide: Ribosomal RNA large subunit methyltransferase F (336 aa).

It belongs to the methyltransferase superfamily. METTL16/RlmF family.

The protein resides in the cytoplasm. The catalysed reaction is adenosine(1618) in 23S rRNA + S-adenosyl-L-methionine = N(6)-methyladenosine(1618) in 23S rRNA + S-adenosyl-L-homocysteine + H(+). Specifically methylates the adenine in position 1618 of 23S rRNA. This Serratia proteamaculans (strain 568) protein is Ribosomal RNA large subunit methyltransferase F.